A 460-amino-acid polypeptide reads, in one-letter code: Zinc transporter 6 (460 aa).

Residues methionine 1 to lysine 33 lie on the Cytoplasmic side of the membrane. Residues isoleucine 34–serine 54 traverse the membrane as a helical segment. Over threonine 55 to threonine 64 the chain is Extracellular. Residues tyrosine 65–valine 85 form a helical membrane-spanning segment. Topologically, residues lysine 86 to arginine 98 are cytoplasmic. Residues phenylalanine 99–leucine 119 form a helical membrane-spanning segment. Topologically, residues lysine 120–threonine 134 are extracellular. Residues glycine 135 to valine 155 traverse the membrane as a helical segment. Topologically, residues arginine 156–proline 200 are cytoplasmic. The helical transmembrane segment at phenylalanine 201–isoleucine 221 threads the bilayer. Topologically, residues asparagine 222–aspartate 228 are extracellular. The chain crosses the membrane as a helical span at residues threonine 229–tyrosine 249. Topologically, residues serine 250–proline 460 are cytoplasmic. Residues proline 372 to proline 392 form a disordered region.

Belongs to the cation diffusion facilitator (CDF) transporter (TC 2.A.4) family. SLC30A subfamily. As to quaternary structure, heterodimer with SLC30A5; form a functional zinc ion transmembrane transporter.

The protein resides in the golgi apparatus. It is found in the trans-Golgi network membrane. Its function is as follows. Has probably no intrinsic transporter activity but together with SLC30A5 forms a functional zinc ion:proton antiporter heterodimer, mediating zinc entry into the lumen of organelles along the secretory pathway. As part of that zinc ion:proton antiporter, contributes to zinc ion homeostasis within the early secretory pathway and regulates the activation and folding of enzymes like alkaline phosphatases and enzymes involved in phosphatidylinositol glycan anchor biosynthesis. In Gallus gallus (Chicken), this protein is Zinc transporter 6 (SLC30A6).